The sequence spans 84 residues: Large ribosomal subunit protein bL27 (84 aa).

Residues 1 to 21 (MAHKKGASSTRNGRDSNAQRL) form a disordered region. Over residues 7–19 (ASSTRNGRDSNAQ) the composition is skewed to polar residues.

Belongs to the bacterial ribosomal protein bL27 family.

This is Large ribosomal subunit protein bL27 from Clavibacter michiganensis subsp. michiganensis (strain NCPPB 382).